We begin with the raw amino-acid sequence, 563 residues long: Arginine--tRNA ligase (563 aa).

The 'HIGH' region signature appears at 120-130; that stretch reads PNIAKPFHIGH.

This sequence belongs to the class-I aminoacyl-tRNA synthetase family. Monomer.

The protein resides in the cytoplasm. The enzyme catalyses tRNA(Arg) + L-arginine + ATP = L-arginyl-tRNA(Arg) + AMP + diphosphate. This Clostridium botulinum (strain 657 / Type Ba4) protein is Arginine--tRNA ligase.